A 223-amino-acid polypeptide reads, in one-letter code: Urease accessory protein UreG (223 aa).

The disordered stretch occupies residues 1-30 (MAKHSHDHTHDHHDRPRRVRKPGEPLRIGV). Position 32–39 (32–39 (GPVGSGKT)) interacts with GTP.

This sequence belongs to the SIMIBI class G3E GTPase family. UreG subfamily. Homodimer. UreD, UreF and UreG form a complex that acts as a GTP-hydrolysis-dependent molecular chaperone, activating the urease apoprotein by helping to assemble the nickel containing metallocenter of UreC. The UreE protein probably delivers the nickel.

It localises to the cytoplasm. Its function is as follows. Facilitates the functional incorporation of the urease nickel metallocenter. This process requires GTP hydrolysis, probably effectuated by UreG. The sequence is that of Urease accessory protein UreG from Mycobacterium ulcerans (strain Agy99).